The following is a 141-amino-acid chain: Large ribosomal subunit protein uL11 (141 aa).

Belongs to the universal ribosomal protein uL11 family. As to quaternary structure, part of the ribosomal stalk of the 50S ribosomal subunit. Interacts with L10 and the large rRNA to form the base of the stalk. L10 forms an elongated spine to which L12 dimers bind in a sequential fashion forming a multimeric L10(L12)X complex. Post-translationally, one or more lysine residues are methylated.

Functionally, forms part of the ribosomal stalk which helps the ribosome interact with GTP-bound translation factors. This is Large ribosomal subunit protein uL11 from Dinoroseobacter shibae (strain DSM 16493 / NCIMB 14021 / DFL 12).